The following is a 218-amino-acid chain: TPA-induced transmembrane protein homolog (218 aa).

A disordered region spans residues 1-54 (MEEGSRSQSPREELELSMLDGPQEELTPLNNDLRIQPNSAEDPSPAQVGKESPW). The chain crosses the membrane as a helical span at residues 66-86 (KLWMVIVTIFLCFIIVIVISL).

The protein resides in the endoplasmic reticulum membrane. The protein is TPA-induced transmembrane protein homolog of Mus musculus (Mouse).